A 770-amino-acid chain; its full sequence is MAYGWWRRRRRRWRRWRRRPWRRRWRTRRRRPARRRGRRRNVRRRRRGGRWRRRYRRWKRKGRRRKKAKIIIRQWQPNYRRRCNIVGYIPVLICGENTVSRNYATHSDDTNYPGPFGGGMTTDKFTLRILYGEYKRFMNYWTASNEDLDLCRYLGVNLYFFRHPDVDFIIKINTMPPFLDTELTAPSIHPGMLALDKRARWIPSLKSRPGKKHYIKIRVGAPKMFTDKWYPQTDLCDMVLLTVYATAADMQYPFGSPLTDSVVVNFQVLQSMYDEKISILPDEKIQRQNLLTSISNYIPFYNTTQTIAQLKPFVDAGNAISGTTTTTWGSLLNTTKFTTTTTTTYTYPGTTNTTVTFITANDSWYRGTVYNQNIKDVAKKAAELYSKATKAVLGNTFTTEDYTLGYHGGLYSSIWLSPGRSYFETPGAYTDIKYNPFTDRGEGNMLWIDWLSKKNMNYDKVQSKCLISDLPLWAAAYGYVEFCAKSTGDQNIHMNARLLIRSPFTDPQLLVHTDPTKGFVPYSLNFGNGKMPGGSSNVPIRMRAKWYPTLLHQQEVLEALAQSGPFAYHADIKKVSLGMKYRFKWIWGGNPVRQQVVRNPCKETHSSGNRVPRSLQIVDPKYNSPELTFHTWDFKRGLFGPKAIQRMQQQPTTTDIFSAGRKRPRRDTEVYHSSQEGEQKESLLFPPVKLLRRVPPWEDSQQEESGSQSSEEETQTVSQQLKQQLQQQRILGVKLRLLFNQVQKIQQNQDINPTLLPRGGDLASLFQIAP.

2 disordered regions span residues 645–682 and 697–717; these read QRMQQQPTTTDIFSAGRKRPRRDTEVYHSSQEGEQKES and WEDSQQEESGSQSSEEETQTV. Polar residues predominate over residues 646–656; it reads RMQQQPTTTDI. A compositionally biased stretch (basic and acidic residues) spans 666–681; it reads RDTEVYHSSQEGEQKE. Over residues 703–717 the composition is skewed to low complexity; it reads EESGSQSSEEETQTV.

Belongs to the anelloviridae capsid protein family.

It localises to the virion. Its function is as follows. May self assemble to form an icosahedral capsid. Presumably essential to initiate and monitor viral genome replication by a rolling circle mechanism. The sequence is that of Probable capsid and replication-associated protein from Homo sapiens (Human).